A 564-amino-acid polypeptide reads, in one-letter code: Dihydroxy-acid dehydratase (564 aa).

C55 contacts [2Fe-2S] cluster. D87 lines the Mg(2+) pocket. C128 contacts [2Fe-2S] cluster. Mg(2+)-binding residues include D129 and K130. Position 130 is an N6-carboxylysine (K130). Position 200 (C200) interacts with [2Fe-2S] cluster. Position 452 (E452) interacts with Mg(2+). The Proton acceptor role is filled by S478.

Belongs to the IlvD/Edd family. As to quaternary structure, homodimer. It depends on [2Fe-2S] cluster as a cofactor. Mg(2+) serves as cofactor.

It catalyses the reaction (2R)-2,3-dihydroxy-3-methylbutanoate = 3-methyl-2-oxobutanoate + H2O. The catalysed reaction is (2R,3R)-2,3-dihydroxy-3-methylpentanoate = (S)-3-methyl-2-oxopentanoate + H2O. It functions in the pathway amino-acid biosynthesis; L-isoleucine biosynthesis; L-isoleucine from 2-oxobutanoate: step 3/4. The protein operates within amino-acid biosynthesis; L-valine biosynthesis; L-valine from pyruvate: step 3/4. Functions in the biosynthesis of branched-chain amino acids. Catalyzes the dehydration of (2R,3R)-2,3-dihydroxy-3-methylpentanoate (2,3-dihydroxy-3-methylvalerate) into 2-oxo-3-methylpentanoate (2-oxo-3-methylvalerate) and of (2R)-2,3-dihydroxy-3-methylbutanoate (2,3-dihydroxyisovalerate) into 2-oxo-3-methylbutanoate (2-oxoisovalerate), the penultimate precursor to L-isoleucine and L-valine, respectively. The sequence is that of Dihydroxy-acid dehydratase from Albidiferax ferrireducens (strain ATCC BAA-621 / DSM 15236 / T118) (Rhodoferax ferrireducens).